A 379-amino-acid chain; its full sequence is Heterogeneous nuclear ribonucleoprotein A3 (379 aa).

An N-acetylmethionine modification is found at M1. A compositionally biased stretch (pro residues) spans 1–10; the sequence is MEVKPPPGRP. The tract at residues 1 to 34 is disordered; sequence MEVKPPPGRPQPDSGRRRRRRGEEGHDPKEPEQL. A Glycyl lysine isopeptide (Lys-Gly) (interchain with G-Cter in SUMO2) cross-link involves residue K4. The residue at position 14 (S14) is a Phosphoserine. A compositionally biased stretch (basic and acidic residues) spans 21–34; it reads RGEEGHDPKEPEQL. Residues 35-118 form the RRM 1 domain; the sequence is RKLFIGGLSF…RAVSREDSVK (84 aa). K36 participates in a covalent cross-link: Glycyl lysine isopeptide (Lys-Gly) (interchain with G-Cter in SUMO2). A Phosphoserine modification is found at S43. R52 carries the post-translational modification Dimethylated arginine; alternate. R52 is modified (omega-N-methylarginine; alternate). R76 bears the Omega-N-methylarginine mark. S112 and S116 each carry phosphoserine. Residue K118 forms a Glycyl lysine isopeptide (Lys-Gly) (interchain with G-Cter in SUMO2) linkage. Position 124 is a phosphothreonine (T124). The 80-residue stretch at 126 to 205 folds into the RRM 2 domain; the sequence is KKIFVGGIKE…CEVKKALSKQ (80 aa). K134 is subject to N6-acetyllysine; alternate. K134 participates in a covalent cross-link: Glycyl lysine isopeptide (Lys-Gly) (interchain with G-Cter in SUMO2); alternate. Residues K151 and K182 each participate in a glycyl lysine isopeptide (Lys-Gly) (interchain with G-Cter in SUMO2) cross-link. Positions 204-225 are disordered; it reads KQEMQSAGSQRGRGGGSGNFMG. Omega-N-methylarginine; alternate occurs at positions 214, 216, 226, 239, and 246. R214, R216, R226, R239, and R246 each carry asymmetric dimethylarginine; alternate. The span at 214–225 shows a compositional bias: gly residues; sequence RGRGGGSGNFMG. R257 bears the Omega-N-methylarginine mark. Position 286 is an asymmetric dimethylarginine (R286). The tract at residues 335–379 is disordered; sequence NYSGQQQSNYGPMKGGSFGGRSSGSPYGGGYGSGGGSGGYGSRRF. Over residues 347–379 the composition is skewed to gly residues; the sequence is MKGGSFGGRSSGSPYGGGYGSGGGSGGYGSRRF. Position 351 is a phosphoserine (S351). Omega-N-methylarginine is present on R355. Phosphoserine is present on S359. A phosphotyrosine mark is found at Y361 and Y365. Residues S367 and S371 each carry the phosphoserine modification. The residue at position 374 (Y374) is a Phosphotyrosine. Position 376 is a phosphoserine (S376).

As to quaternary structure, identified in the spliceosome C complex.

Its subcellular location is the nucleus. In terms of biological role, plays a role in cytoplasmic trafficking of RNA. Binds to the cis-acting response element, A2RE. May be involved in pre-mRNA splicing. The protein is Heterogeneous nuclear ribonucleoprotein A3 (Hnrnpa3) of Mus musculus (Mouse).